Consider the following 132-residue polypeptide: Small ribosomal subunit protein uS8 (132 aa).

It belongs to the universal ribosomal protein uS8 family. As to quaternary structure, part of the 30S ribosomal subunit. Contacts proteins S5 and S12.

Functionally, one of the primary rRNA binding proteins, it binds directly to 16S rRNA central domain where it helps coordinate assembly of the platform of the 30S subunit. The protein is Small ribosomal subunit protein uS8 of Geobacillus kaustophilus (strain HTA426).